The chain runs to 241 residues: Chloride intracellular channel protein 1 (241 aa).

A2 carries the post-translational modification N-acetylalanine. The segment at A2 to P90 is required for insertion into the membrane. K13 carries the post-translational modification N6-acetyllysine. Positions C24–S27 match the G-site motif. C24 and C59 are disulfide-bonded. A helical transmembrane segment spans residues F26–V46. One can recognise a GST C-terminal domain in the interval Y93–Y233. An N6-acetyllysine modification is found at K119. S121 is modified (phosphoserine). Position 131 is an N6-acetyllysine (K131). S156 and S211 each carry phosphoserine. Y233 carries the phosphotyrosine modification.

It belongs to the chloride channel CLIC family. In terms of assembly, monomer. Homodimer (in vitro). Interacts with TRAPPC2. Dimerization requires a conformation change that leads to the exposure of a large hydrophobic surface. In vivo, this may lead to membrane insertion.

It is found in the nucleus. The protein localises to the nucleus membrane. Its subcellular location is the cytoplasm. It localises to the cell membrane. The protein resides in the endoplasmic reticulum. The enzyme catalyses L-dehydroascorbate + 2 glutathione = glutathione disulfide + L-ascorbate. It catalyses the reaction chloride(in) = chloride(out). The catalysed reaction is iodide(out) = iodide(in). It carries out the reaction thiocyanate(in) = thiocyanate(out). The enzyme catalyses nitrate(in) = nitrate(out). It catalyses the reaction bromide(in) = bromide(out). The catalysed reaction is fluoride(in) = fluoride(out). Its function is as follows. In the soluble state, catalyzes glutaredoxin-like thiol disulfide exchange reactions with reduced glutathione as electron donor. Reduces selenite and dehydroascorbate and may act as an antioxidant during oxidative stress response. Can insert into membranes and form voltage-dependent multi-ion conductive channels. Membrane insertion seems to be redox-regulated and may occur only under oxidizing conditions. Involved in regulation of the cell cycle. The sequence is that of Chloride intracellular channel protein 1 (CLIC1) from Oryctolagus cuniculus (Rabbit).